The primary structure comprises 395 residues: Elongation factor Tu (395 aa).

Residues 10–204 form the tr-type G domain; sequence KPHVNIGTIG…EVDAYIPTPE (195 aa). The G1 stretch occupies residues 19-26; sequence GHVDHGKT. 19-26 lines the GTP pocket; it reads GHVDHGKT. Residue Thr26 participates in Mg(2+) binding. The G2 stretch occupies residues 60 to 64; that stretch reads GITIS. Positions 81–84 are G3; that stretch reads DCPG. Residues 81-85 and 136-139 contribute to the GTP site; these read DCPGH and NKCD. Residues 136 to 139 form a G4 region; the sequence is NKCD. The interval 174 to 176 is G5; that stretch reads SAL.

It belongs to the TRAFAC class translation factor GTPase superfamily. Classic translation factor GTPase family. EF-Tu/EF-1A subfamily. In terms of assembly, monomer.

Its subcellular location is the cytoplasm. It catalyses the reaction GTP + H2O = GDP + phosphate + H(+). Functionally, GTP hydrolase that promotes the GTP-dependent binding of aminoacyl-tRNA to the A-site of ribosomes during protein biosynthesis. This is Elongation factor Tu from Bacillus anthracis (strain A0248).